Here is a 350-residue protein sequence, read N- to C-terminus: DNA polymerase IV (350 aa).

The UmuC domain maps to 7 to 188; it reads IIHIDMDYFF…LPVKKLFGVG (182 aa). Residues Asp11 and Asp106 each coordinate Mg(2+). The active site involves Glu107.

It belongs to the DNA polymerase type-Y family. Monomer. Mg(2+) serves as cofactor.

Its subcellular location is the cytoplasm. The catalysed reaction is DNA(n) + a 2'-deoxyribonucleoside 5'-triphosphate = DNA(n+1) + diphosphate. Functionally, poorly processive, error-prone DNA polymerase involved in untargeted mutagenesis. Copies undamaged DNA at stalled replication forks, which arise in vivo from mismatched or misaligned primer ends. These misaligned primers can be extended by PolIV. Exhibits no 3'-5' exonuclease (proofreading) activity. May be involved in translesional synthesis, in conjunction with the beta clamp from PolIII. The sequence is that of DNA polymerase IV from Francisella philomiragia subsp. philomiragia (strain ATCC 25017 / CCUG 19701 / FSC 153 / O#319-036).